We begin with the raw amino-acid sequence, 85 residues long: Protein RALF-like 28 (85 aa).

An N-terminal signal peptide occupies residues 1 to 31; sequence MSILKETKRFMVVAMFIACVFISNNMNVAVA. 2 disulfide bridges follow: Cys48/Cys53 and Cys66/Cys72. A disordered region spans residues 60–85; sequence NPYHRGCEKSKRCRGPDPPALPRKMI. A compositionally biased stretch (pro residues) spans 75-85; sequence PDPPALPRKMI.

This sequence belongs to the plant rapid alkalinization factor (RALF) family.

The protein localises to the secreted. Its function is as follows. Cell signaling peptide that may regulate plant stress, growth, and development. Mediates a rapid alkalinization of extracellular space by mediating a transient increase in the cytoplasmic Ca(2+) concentration leading to a calcium-dependent signaling events through a cell surface receptor and a concomitant activation of some intracellular mitogen-activated protein kinases. This Arabidopsis thaliana (Mouse-ear cress) protein is Protein RALF-like 28 (RALFL28).